The following is a 492-amino-acid chain: Bifunctional purine biosynthesis protein PurH (492 aa).

An MGS-like domain is found at 1–144 (MKKVILSVSD…KNFKHVTTIV (144 aa)).

It belongs to the PurH family.

The catalysed reaction is (6R)-10-formyltetrahydrofolate + 5-amino-1-(5-phospho-beta-D-ribosyl)imidazole-4-carboxamide = 5-formamido-1-(5-phospho-D-ribosyl)imidazole-4-carboxamide + (6S)-5,6,7,8-tetrahydrofolate. It catalyses the reaction IMP + H2O = 5-formamido-1-(5-phospho-D-ribosyl)imidazole-4-carboxamide. The protein operates within purine metabolism; IMP biosynthesis via de novo pathway; 5-formamido-1-(5-phospho-D-ribosyl)imidazole-4-carboxamide from 5-amino-1-(5-phospho-D-ribosyl)imidazole-4-carboxamide (10-formyl THF route): step 1/1. It functions in the pathway purine metabolism; IMP biosynthesis via de novo pathway; IMP from 5-formamido-1-(5-phospho-D-ribosyl)imidazole-4-carboxamide: step 1/1. This Staphylococcus carnosus (strain TM300) protein is Bifunctional purine biosynthesis protein PurH.